The primary structure comprises 314 residues: Serine/threonine-protein phosphatase CPPED1 (314 aa).

Phosphoserine is present on Ser-2. The tract at residues 47–250 is catalytic; that stretch reads KAWSTGDCDN…KVVFSGHYHR (204 aa). Positions 53, 90, 127, and 247 each coordinate a divalent metal cation. At Ser-294 the chain carries Phosphoserine.

Belongs to the metallophosphoesterase superfamily. CPPED1 family. Requires a divalent metal cation as cofactor. As to expression, expressed in subcutaneous adipose tissue.

It localises to the cytoplasm. It carries out the reaction O-phospho-L-seryl-[protein] + H2O = L-seryl-[protein] + phosphate. The catalysed reaction is O-phospho-L-threonyl-[protein] + H2O = L-threonyl-[protein] + phosphate. Functionally, protein phosphatase that dephosphorylates AKT family kinase specifically at 'Ser-473', blocking cell cycle progression and promoting cell apoptosis. May play an inhibitory role in glucose uptake by adipocytes. This chain is Serine/threonine-protein phosphatase CPPED1 (CPPED1), found in Homo sapiens (Human).